Reading from the N-terminus, the 531-residue chain is UDP-glucuronosyltransferase 1A7 (531 aa).

The N-terminal stretch at 1–25 is a signal peptide; it reads MAPADFPASLPLCVCLLLASGLAQA. 2 N-linked (GlcNAc...) asparagine glycosylation sites follow: N293 and N431. Residues 489–509 form a helical membrane-spanning segment; the sequence is VIGFLLAIVLTVVFIVFKCCA.

This sequence belongs to the UDP-glycosyltransferase family. In terms of assembly, homodimer. Homooligomer. Interacts with UGT1A1, UGT1A3, UGT1A4, UGT1A6, UGT1A8, UGT1A9 and UGT1A10 to form heterodimers. In terms of tissue distribution, widely expressed with highest levels detected in colon and kidney.

Its subcellular location is the endoplasmic reticulum membrane. The enzyme catalyses glucuronate acceptor + UDP-alpha-D-glucuronate = acceptor beta-D-glucuronoside + UDP + H(+). It catalyses the reaction 17alpha-estradiol + UDP-alpha-D-glucuronate = 17alpha-estradiol 3-O-(beta-D-glucuronate) + UDP + H(+). The catalysed reaction is prunetin + UDP-alpha-D-glucuronate = prunetin-5-O-beta-D-glucuronide + UDP. It carries out the reaction 5-epi-5-F2t-IsoP + UDP-alpha-D-glucuronate = 5-epi-5-F2t-IsoP-glucuronide + UDP + H(+). The enzyme catalyses (E)-ferulate + UDP-alpha-D-glucuronate = (E)-ferulic acid beta-D-glucuronate ester + UDP. It catalyses the reaction candesartan + UDP-alpha-D-glucuronate = candesartan O-beta-D-glucuronoside + UDP. The catalysed reaction is SN-38 + UDP-alpha-D-glucuronate = SN-38 O-beta-D-glucuronide + UDP + H(+). It carries out the reaction mycophenolate + UDP-alpha-D-glucuronate = mycophenolate 7-O-beta-D-glucuronide + UDP + H(+). In terms of biological role, UDP-glucuronosyltransferase (UGT) that catalyzes phase II biotransformation reactions in which lipophilic substrates are conjugated with glucuronic acid to increase the metabolite's water solubility, thereby facilitating excretion into either the urine or bile. Essential for the elimination and detoxification of drugs, xenobiotics and endogenous compounds. Catalyzes the glucuronidation of endogenous estrogen hormone epiestradiol. Involved in the glucuronidation of F2-isoprostane (5-epi-5-F2t-IsoP). Involved in the glucuronidation of the phytochemical ferulic acid at the carboxylic acid group. Also catalyzes the glucuronidation of the isoflavones genistein, daidzein, glycitein, formononetin, biochanin A and prunetin, which are phytoestrogens with anticancer and cardiovascular properties. Involved in the glucuronidation of the AGTR1 angiotensin receptor antagonist caderastan, a drug which can inhibit the effect of angiotensin II. Involved in the biotransformation of 7-ethyl-10-hydroxycamptothecin (SN-38), the pharmacologically active metabolite of the anticancer drug irinotecan. Also metabolizes mycophenolate, an immunosuppressive agent. This chain is UDP-glucuronosyltransferase 1A7, found in Mus musculus (Mouse).